A 576-amino-acid chain; its full sequence is Polyphenol oxidase 3 (576 aa).

Cu cation-binding residues include histidine 61, histidine 85, histidine 94, histidine 259, histidine 263, and histidine 296. Residues 83–85 (CTH) constitute a cross-link (2'-(S-cysteinyl)-histidine (Cys-His)). Histidine 263 is a substrate binding site. The propeptide at 393 to 576 (FVTTQTENPA…ILDDIIHRVN (184 aa)) is removed in mature form.

It belongs to the tyrosinase family. As to quaternary structure, tetramer composed of two subunits of PPO3 (H subunits) and two subunits of the as yet uncharacterized product of ORF239342 (L subunits). Cu(2+) is required as a cofactor. In terms of processing, the C-ter is probably cleaved after Gly-392 since the mature active protein is smaller than the protein encoded by the gene.

It carries out the reaction 2 L-dopa + O2 = 2 L-dopaquinone + 2 H2O. The catalysed reaction is L-tyrosine + O2 = L-dopaquinone + H2O. Its function is as follows. Copper-containing oxidase that catalyzes both the o-hydroxylation of monophenols and the subsequent oxidation of the resulting o-diphenols into reactive o-quinones, which evolve spontaneously to produce intermediates, which associate in dark brown pigments. Involved in the initial step of melanin synthesis. Melanins constitute a mechanism of defense and resistance to stress such as UV radiations, free radicals, gamma rays, dehydratation and extreme temperatures, and contribute to the fungal cell-wall resistance against hydrolytic enzymes in avoiding cellular lysis. Fungal pigments are also involved in the formation and stability of spores. This chain is Polyphenol oxidase 3 (PPO3), found in Agaricus bisporus (White button mushroom).